Consider the following 81-residue polypeptide: D-alanyl carrier protein (81 aa).

The Carrier domain occupies 1–81 (MADEAIKNGV…KIIAKVEQAQ (81 aa)). Ser39 is modified (O-(pantetheine 4'-phosphoryl)serine).

Belongs to the DltC family. 4'-phosphopantetheine is transferred from CoA to a specific serine of apo-DCP.

The protein resides in the cytoplasm. Its pathway is cell wall biogenesis; lipoteichoic acid biosynthesis. Functionally, carrier protein involved in the D-alanylation of lipoteichoic acid (LTA). The loading of thioester-linked D-alanine onto DltC is catalyzed by D-alanine--D-alanyl carrier protein ligase DltA. The DltC-carried D-alanyl group is further transferred to cell membrane phosphatidylglycerol (PG) by forming an ester bond, probably catalyzed by DltD. D-alanylation of LTA plays an important role in modulating the properties of the cell wall in Gram-positive bacteria, influencing the net charge of the cell wall. The polypeptide is D-alanyl carrier protein (Lacticaseibacillus rhamnosus (Lactobacillus rhamnosus)).